The primary structure comprises 135 residues: Protein NrdI (135 aa).

The protein belongs to the NrdI family.

In terms of biological role, probably involved in ribonucleotide reductase function. The chain is Protein NrdI from Salmonella gallinarum (strain 287/91 / NCTC 13346).